Here is a 486-residue protein sequence, read N- to C-terminus: Inosine-5'-monophosphate dehydrogenase (486 aa).

CBS domains lie at 99-154 (IVED…LVKE) and 156-215 (MTKE…VRDE). Residues D247 and 294–296 (GIG) each bind NAD(+). K(+)-binding residues include G296 and G298. An IMP-binding site is contributed by S299. Position 301 (C301) interacts with K(+). The Thioimidate intermediate role is filled by C301. IMP-binding positions include 334-336 (DGG), 357-358 (GN), and 381-385 (YRGMG). R397 functions as the Proton acceptor in the catalytic mechanism. E412 serves as a coordination point for IMP. K(+) contacts are provided by E466, S467, and H468.

This sequence belongs to the IMPDH/GMPR family. Homotetramer. K(+) is required as a cofactor.

It carries out the reaction IMP + NAD(+) + H2O = XMP + NADH + H(+). It functions in the pathway purine metabolism; XMP biosynthesis via de novo pathway; XMP from IMP: step 1/1. With respect to regulation, mycophenolic acid (MPA) is a non-competitive inhibitor that prevents formation of the closed enzyme conformation by binding to the same site as the amobile flap. In contrast, mizoribine monophosphate (MZP) is a competitive inhibitor that induces the closed conformation. MPA is a potent inhibitor of mammalian IMPDHs but a poor inhibitor of the bacterial enzymes. MZP is a more potent inhibitor of bacterial IMPDH. Functionally, catalyzes the conversion of inosine 5'-phosphate (IMP) to xanthosine 5'-phosphate (XMP), the first committed and rate-limiting step in the de novo synthesis of guanine nucleotides, and therefore plays an important role in the regulation of cell growth. The polypeptide is Inosine-5'-monophosphate dehydrogenase (Pyrococcus horikoshii (strain ATCC 700860 / DSM 12428 / JCM 9974 / NBRC 100139 / OT-3)).